The chain runs to 1216 residues: DNA polymerase subunit gamma-1 (1216 aa).

The segment covering 27 to 37 has biased composition (low complexity); it reads SSSVLDPVPSD. The interval 27 to 50 is disordered; it reads SSSVLDPVPSDGQPQSQMPSSENG. A compositionally biased stretch (polar residues) spans 38–50; it reads GQPQSQMPSSENG. Positions 179–183 match the Exo I motif; that stretch reads VFDVE. The active-site Exonuclease activity is aspartate 181. An Exo II motif is present at residues 250–258; sequence VGHNVSFDR. Residue serine 289 coordinates DNA. Basic residues predominate over residues 301–314; that stretch reads GKHKTQHPTKRGQK. The interval 301-321 is disordered; sequence GKHKTQHPTKRGQKSQKNANG. The Exo III motif lies at 377-385; the sequence is YCARDVWAT. The segment at 488–518 is disordered; the sequence is TASASKLPIEGAGPFGDPMDQEDPGPPSEEE. Residues 491 to 552 form an accessory-interacting determinant region; sequence ASKLPIEGAG…RPQHLPGHPG (62 aa). A compositionally biased stretch (acidic residues) spans 506-518; that stretch reads MDQEDPGPPSEEE. Residue arginine 560 participates in RNA binding. A DNA-binding site is contributed by serine 574. Positions 731, 740, and 745 each coordinate RNA. Lysine 783 and threonine 826 together coordinate DNA. The segment at 835 to 841 is trigger loop; sequence TWLTASN. The RNA site is built by serine 840 and arginine 846. A Pol A motif is present at residues 864 to 873; it reads VGADVDSQEL. A 2'-deoxyribonucleoside 5'-triphosphate contacts are provided by aspartate 867, valine 868, serine 870, glutamate 872, arginine 920, lysine 924, and tyrosine 928. The Mg(2+) site is built by aspartate 867 and valine 868. The short motif at 920-935 is the Pol B element; that stretch reads REHAKVFNYGRIYGAG. DNA contacts are provided by threonine 1071 and serine 1072. A Pol C motif is present at residues 1111-1118; sequence HDEVRYLV. Aspartate 1112 lines the a 2'-deoxyribonucleoside 5'-triphosphate pocket. A Mg(2+)-binding site is contributed by aspartate 1112.

The protein belongs to the DNA polymerase type-A family. As to quaternary structure, heterotrimer composed of a catalytic subunit and a homodimer of accessory subunits (POLG:POLG2). Interacts with TTC3. Interacts with LIG3. It depends on Mg(2+) as a cofactor.

Its subcellular location is the mitochondrion. It localises to the mitochondrion matrix. The protein localises to the mitochondrion nucleoid. The catalysed reaction is DNA(n) + a 2'-deoxyribonucleoside 5'-triphosphate = DNA(n+1) + diphosphate. The enzyme catalyses a 3'-end 2'-deoxyribonucleotidyl-deoxyribonucleotide-DNA + H2O = a 3'-end 2'-deoxyribonucleotide-DNA + a 2'-deoxyribonucleoside 5'-phosphate + H(+). It catalyses the reaction a 5'-end 2'-deoxyribose-2'-deoxyribonucleotide-DNA = (2E,4S)-4-hydroxypenten-2-al-5-phosphate + a 5'-end 5'-phospho-2'-deoxyribonucleoside-DNA + H(+). With respect to regulation, inhibited by dideoxynucleotides such as antiviral agent zalcitabine. Catalytic subunit of DNA polymerase gamma solely responsible for replication of mitochondrial DNA (mtDNA). Replicates both heavy and light strands of the circular mtDNA genome using a single-stranded DNA template, RNA primers and the four deoxyribonucleoside triphosphates as substrates. Has 5' -&gt; 3' polymerase activity. Functionally interacts with TWNK and SSBP1 at the replication fork to form a highly processive replisome, where TWNK unwinds the double-stranded DNA template prior to replication and SSBP1 covers the parental heavy strand to enable continuous replication of the entire mitochondrial genome. A single nucleotide incorporation cycle includes binding of the incoming nucleotide at the insertion site, a phosphodiester bond formation reaction that extends the 3'-end of the primer DNA, and translocation of the primer terminus to the post-insertion site. After completing replication of a mtDNA strand, mediates 3' -&gt; 5' exonucleolytic degradation at the nick to enable proper ligation. Highly accurate due to high nucleotide selectivity and 3' -&gt; 5' exonucleolytic proofreading. Proficiently corrects base substitutions, single-base additions and deletions in non-repetitive sequences and short repeats, but displays lower proofreading activity when replicating longer homopolymeric stretches. Exerts exonuclease activity toward single-stranded DNA and double-stranded DNA containing 3'-terminal mispairs. When a misincorporation occurs, transitions from replication to a pro-nucleolytic editing mode and removes the missincorporated nucleoside in the exonuclease active site. Proceeds via an SN2 nucleolytic mechanism in which Asp-198 catalyzes phosphodiester bond hydrolysis and Glu-200 stabilizes the leaving group. As a result the primer strand becomes one nucleotide shorter and is positioned in the post-insertion site, ready to resume DNA synthesis. Exerts 5'-deoxyribose phosphate (dRP) lyase activity and mediates repair-associated mtDNA synthesis (gap filling) in base-excision repair pathway. Catalyzes the release of the 5'-terminal 2-deoxyribose-5-phosphate sugar moiety from incised apurinic/apyrimidinic (AP) sites to produce a substrate for DNA ligase. The dRP lyase reaction does not require divalent metal ions and likely proceeds via a Schiff base intermediate in a beta-elimination reaction mechanism. The protein is DNA polymerase subunit gamma-1 of Rattus norvegicus (Rat).